The sequence spans 454 residues: Jacalin-related lectin 37 (454 aa).

One can recognise a Jacalin-type lectin domain in the interval 295–438 (SRFTPPRGIQ…LTALGVHFSP (144 aa)).

The protein belongs to the jacalin lectin family.

The sequence is that of Jacalin-related lectin 37 (JAL37) from Arabidopsis thaliana (Mouse-ear cress).